The sequence spans 193 residues: Guanylate kinase (193 aa).

The region spanning 8 to 188 is the Guanylate kinase-like domain; it reads GRLVVLVGPS…ACEQLVSLFV (181 aa). 15–22 serves as a coordination point for ATP; that stretch reads GPSAVGKS.

Belongs to the guanylate kinase family.

Its subcellular location is the cytoplasm. It carries out the reaction GMP + ATP = GDP + ADP. Functionally, essential for recycling GMP and indirectly, cGMP. This Nocardia farcinica (strain IFM 10152) protein is Guanylate kinase.